The primary structure comprises 397 residues: Antiviral protein SKI8 (397 aa).

7 WD repeats span residues 21 to 42 (SVSA…KVWD), 67 to 101 (HVDV…ITRE), 126 to 157 (ALKW…KFHP), 191 to 213 (SVDI…QISE), 238 to 264 (SVKF…TLYE), 296 to 319 (SLSF…RFWD), and 359 to 392 (DVKF…RWFR).

The protein belongs to the SKI8 family. Component of the SKI complex composed of at least SKI2, SKI3 and SKI8. The SKI complex interacts with SKI7, which makes the link between the SKI complex and the exosome in order to perform mRNA degradation.

Its subcellular location is the cytoplasm. It localises to the nucleus. The protein resides in the chromosome. In terms of biological role, involved in double-strand break (DSB) formation during meiotic recombination through stabilization of SPO11 association with meiotic chromosome and helping SPO11 to recruit other DSB proteins like REC102 and REC104 to meiotic chromosomes. Also a component of the SKI complex involved in 3'-mRNA degradation pathway. Represses dsRNA virus propagation by specifically blocking translation of viral mRNAs, perhaps recognizing the absence of CAP or poly(A). Essential for controlling the propagation of M double-stranded RNA (dsRNA) and thus for preventing virus-induced cytopathology. The protein is Antiviral protein SKI8 (SKI8) of Saccharomyces cerevisiae (strain ATCC 204508 / S288c) (Baker's yeast).